The sequence spans 566 residues: Liver carboxylesterase (566 aa).

The first 18 residues, 1-18 (MWLLPLVLTSLASSATWA), serve as a signal peptide directing secretion. A glycan (N-linked (GlcNAc...) asparagine) is linked at asparagine 80. Cysteine 88 and cysteine 117 are joined by a disulfide. Serine 222 (acyl-ester intermediate) is an active-site residue. Cysteine 274 and cysteine 285 are disulfide-bonded. Glutamate 354 acts as the Charge relay system in catalysis. At serine 379 the chain carries Phosphoserine. Catalysis depends on histidine 467, which acts as the Charge relay system. The Prevents secretion from ER signature appears at 563–566 (HAEL).

The protein belongs to the type-B carboxylesterase/lipase family.

It localises to the endoplasmic reticulum lumen. The catalysed reaction is a carboxylic ester + H2O = an alcohol + a carboxylate + H(+). With respect to regulation, activated by CHAPS at concentrations of up to 130 mM, higher concentrations reduce activity. In the presence of CHAPS, activity is stimulated by non-ionic detergents. Inhibited by the esterase inhibitors diisopropylfluorophosphate and phenylmethylsulfonyl fluoride. In terms of biological role, involved in the detoxification of xenobiotics and in the activation of ester and amide prodrugs. Active towards triacylglycerides containing short-chain fatty acids from C2 to C6, and 1(3)-monoacylglycerols containing fatty acids from C2 to C12. Inactive on long-chain triacylglycerols and diacylglycerol. Hydrolyzes aromatic and alkyl esters and vitamin A acetate. The hydrolysis rate depends upon the amino acid promoiety and the esterification site of the prodrug. Aromatic promoieties are favored, highest rates are observed with phenylalanyl progdrugs, hydrolysis of valyl and isoleucyl prodrugs is less efficient. With floxuridine prodrugs, activity is higher on 5' monoesters than on 3' monoesters. With gemcitabine prodrugs, activity is higher on 3' monoesters than on 5' monoesters. This Sus scrofa (Pig) protein is Liver carboxylesterase.